A 252-amino-acid polypeptide reads, in one-letter code: 5'-nucleotidase SurE (252 aa).

Asp-8, Asp-9, Ser-39, and Asn-91 together coordinate a divalent metal cation.

This sequence belongs to the SurE nucleotidase family. Requires a divalent metal cation as cofactor.

It localises to the cytoplasm. It catalyses the reaction a ribonucleoside 5'-phosphate + H2O = a ribonucleoside + phosphate. Its function is as follows. Nucleotidase that shows phosphatase activity on nucleoside 5'-monophosphates. In Legionella pneumophila (strain Lens), this protein is 5'-nucleotidase SurE.